We begin with the raw amino-acid sequence, 177 residues long: Interleukin-1 receptor antagonist protein (177 aa).

Residues 1-25 form the signal peptide; sequence MRPSRSTRRHLISLLLFLFHSETAC. Cysteines 91 and 141 form a disulfide. Asparagine 109 carries an N-linked (GlcNAc...) asparagine glycan.

It belongs to the IL-1 family.

The protein resides in the secreted. In terms of biological role, anti-inflammatory antagonist of interleukin-1 family of proinflammatory cytokines such as interleukin-1beta/IL1B and interleukin-1alpha/IL1A. Protects from immune dysregulation and uncontrolled systemic inflammation triggered by IL1 for a range of innate stimulatory agents such as pathogens. This Oryctolagus cuniculus (Rabbit) protein is Interleukin-1 receptor antagonist protein (IL1RN).